We begin with the raw amino-acid sequence, 147 residues long: UPF0251 protein CTC_01373 (147 aa).

The protein belongs to the UPF0251 family.

The chain is UPF0251 protein CTC_01373 from Clostridium tetani (strain Massachusetts / E88).